The following is a 319-amino-acid chain: Thioredoxin reductase 1 (319 aa).

FAD-binding positions include 11 to 14 (SGPA), 40 to 41 (IA), glutamine 45, asparagine 54, valine 87, cysteine 145, aspartate 288, and 295 to 297 (RQA). A disulfide bridge connects residues cysteine 142 and cysteine 145. Serine 303 is modified (phosphoserine).

Belongs to the class-II pyridine nucleotide-disulfide oxidoreductase family. As to quaternary structure, homodimer. FAD is required as a cofactor.

The protein resides in the cytoplasm. It is found in the mitochondrion intermembrane space. It catalyses the reaction [thioredoxin]-dithiol + NADP(+) = [thioredoxin]-disulfide + NADPH + H(+). Its function is as follows. Central component in the thioredoxin system. Reduces thioredoxins 1 and 2. This chain is Thioredoxin reductase 1 (TRR1), found in Saccharomyces cerevisiae (strain ATCC 204508 / S288c) (Baker's yeast).